Reading from the N-terminus, the 409-residue chain is Tryptophan synthase beta chain (409 aa).

Position 95 is an N6-(pyridoxal phosphate)lysine (lysine 95).

It belongs to the TrpB family. Tetramer of two alpha and two beta chains. Pyridoxal 5'-phosphate serves as cofactor.

It catalyses the reaction (1S,2R)-1-C-(indol-3-yl)glycerol 3-phosphate + L-serine = D-glyceraldehyde 3-phosphate + L-tryptophan + H2O. The protein operates within amino-acid biosynthesis; L-tryptophan biosynthesis; L-tryptophan from chorismate: step 5/5. Its function is as follows. The beta subunit is responsible for the synthesis of L-tryptophan from indole and L-serine. This is Tryptophan synthase beta chain from Pseudomonas syringae pv. tomato (strain ATCC BAA-871 / DC3000).